The primary structure comprises 1076 residues: MPKRTDIQSILIIGAGPIVIGQACEFDYSGAQACKALREEGFRVILVNSNPATIMTDPVMADATYIEPITWQAVEKIIEAERPDAVLPTMGGQTALNCALDLDKHGVLEKFGVEMIGANADAINMAEDRDLFDQAMKRIGLECPKAKVAHSMDEAWQIQSELGFPVIIRPSYTMGGSGGGVAYNKEEFEEICTRGFELSNNHELLIDESLLGWKEYEMEVVRDKNDNCIIVCAIENFDPMGVHTGDSITVAPAQTLTDKEYQNMRDASLAVLREIGVETGGSNVQFGVDPDTGRVVVIEMNPRVSRSSALASKATGFPIAKIAAKLAVGYTLDELSNDITGGRTPASFEPSIDYVVTKIPRFTFEKFPQANDRLTTQMKSVGEVMAIGRTFQESLQKALRGLETGNDGLDPKVTRFNDDGMAHIKGELQVAGAERIFYVADAMRAGLSVEELFRLTNIDRWFLVQLEDLVRTEAELAKRSLSELTPRELFALKRKGFSDARLAGLLGVAEKDFRRTRQAAGIRPVYKRVDTCAAEFATDTAYMYSSYEEECEAEVSDRPKIMVLGGGPNRIGQGIEFDYCCVHAALAMRDDGYETIMVNCNPETVSTDYDTSDRLYFEPVTLEDVLEIADKEKPAGVIVQFGGQTPLKLARELEAAGVPIIGTTPDAIDRAEDRERFQHMVDKLGLKQPANATARSXEEAFAKAEAIGYPXVVRPSYVLGGXAMEIVYDASELENYMTHAVKVSNDSPVLLDHFLNCAIEVDIDAVSDGHQVVIGGIMQHIEQAGVHSGDSACALPPYSLPAEVQDEMRDQVKRMAVELGVKGLMNVQLAWQDGEIYVIEVNPRASRTVPFVSKCVGTSLAQVAARCMAGISLAEQGFVEEIVPHFYSVKEAVFPFAKFPGVDPILSPEMKSTGEVMGSGDTFAEAFYKAQLGAGEAIPALEGERKAFLSVRDPDKQGVIDVARSLLGLGFTLCATRGTASALQQAGLPVDVVNKVYEGRPHXVDLLKNDXVAYIVNTTEGRQAINDSSVIRRTALARKVPYATTLAGANAVCLALEYGNAITVRRLQELHAGVSQ.

A carboxyphosphate synthetic domain region spans residues 1-403 (MPKRTDIQSI…SLQKALRGLE (403 aa)). ATP-binding residues include R129, R169, G175, G176, E208, L210, E215, G241, V242, H243, Q285, and E299. The ATP-grasp 1 domain maps to 133 to 328 (DQAMKRIGLE…IAKIAAKLAV (196 aa)). Residues Q285, E299, and N301 each coordinate Mg(2+). Mn(2+) contacts are provided by Q285, E299, and N301. The oligomerization domain stretch occupies residues 404–553 (TGNDGLDPKV…YSSYEEECEA (150 aa)). The carbamoyl phosphate synthetic domain stretch occupies residues 554-935 (EVSDRPKIMV…AFYKAQLGAG (382 aa)). One can recognise an ATP-grasp 2 domain in the interval 678 to 869 (QHMVDKLGLK…LAQVAARCMA (192 aa)). Residues R714, H753, L755, E760, G785, V786, H787, S788, Q828, and E840 each coordinate ATP. 3 residues coordinate Mg(2+): Q828, E840, and N842. 3 residues coordinate Mn(2+): Q828, E840, and N842. Positions 936–1076 (EAIPALEGER…LQELHAGVSQ (141 aa)) constitute an MGS-like domain. Residues 936 to 1076 (EAIPALEGER…LQELHAGVSQ (141 aa)) form an allosteric domain region.

This sequence belongs to the CarB family. In terms of assembly, composed of two chains; the small (or glutamine) chain promotes the hydrolysis of glutamine to ammonia, which is used by the large (or ammonia) chain to synthesize carbamoyl phosphate. Tetramer of heterodimers (alpha,beta)4. It depends on Mg(2+) as a cofactor. Mn(2+) is required as a cofactor.

It carries out the reaction hydrogencarbonate + L-glutamine + 2 ATP + H2O = carbamoyl phosphate + L-glutamate + 2 ADP + phosphate + 2 H(+). The catalysed reaction is hydrogencarbonate + NH4(+) + 2 ATP = carbamoyl phosphate + 2 ADP + phosphate + 2 H(+). It functions in the pathway amino-acid biosynthesis; L-arginine biosynthesis; carbamoyl phosphate from bicarbonate: step 1/1. The protein operates within pyrimidine metabolism; UMP biosynthesis via de novo pathway; (S)-dihydroorotate from bicarbonate: step 1/3. Its function is as follows. Large subunit of the glutamine-dependent carbamoyl phosphate synthetase (CPSase). CPSase catalyzes the formation of carbamoyl phosphate from the ammonia moiety of glutamine, carbonate, and phosphate donated by ATP, constituting the first step of 2 biosynthetic pathways, one leading to arginine and/or urea and the other to pyrimidine nucleotides. The large subunit (synthetase) binds the substrates ammonia (free or transferred from glutamine from the small subunit), hydrogencarbonate and ATP and carries out an ATP-coupled ligase reaction, activating hydrogencarbonate by forming carboxy phosphate which reacts with ammonia to form carbamoyl phosphate. This Halomonas eurihalina protein is Carbamoyl phosphate synthase large chain.